Consider the following 987-residue polypeptide: ATP-dependent 6-phosphofructokinase subunit alpha (987 aa).

The N-terminal catalytic PFK domain 1 stretch occupies residues 1–602 (MPSSSDAINR…DYRYFRDISI (602 aa)). Residues Gly-237, 300 to 301 (RC), and 330 to 333 (GDGS) contribute to the ATP site. Asp-331 is a Mg(2+) binding site. Beta-D-fructose 6-phosphate contacts are provided by residues 376–378 (SID), Arg-413, 420–422 (MGR), Glu-477, Arg-504, and 510–513 (HVQR). Asp-378 serves as the catalytic Proton acceptor. The interdomain linker stretch occupies residues 603-616 (YDDGSKQLSEDKRL). The segment at 617–987 (NIAIVHVGAA…KSLLKKQERY (371 aa)) is C-terminal regulatory PFK domain 2. Beta-D-fructose 2,6-bisphosphate is bound by residues Arg-686, 743–747 (TVSNN), Arg-781, 788–790 (QGG), Glu-848, Arg-874, 880–883 (HVQQ), and Arg-958.

It belongs to the phosphofructokinase type A (PFKA) family. ATP-dependent PFK group I subfamily. Eukaryotic two domain clade 'E' sub-subfamily. Heterooctamer of 4 alpha and 4 beta chains. Mg(2+) is required as a cofactor.

It is found in the cytoplasm. The catalysed reaction is beta-D-fructose 6-phosphate + ATP = beta-D-fructose 1,6-bisphosphate + ADP + H(+). It participates in carbohydrate degradation; glycolysis; D-glyceraldehyde 3-phosphate and glycerone phosphate from D-glucose: step 3/4. With respect to regulation, allosterically activated by ADP, AMP, or fructose 2,6-bisphosphate, and allosterically inhibited by ATP or citrate. In terms of biological role, catalyzes the phosphorylation of D-fructose 6-phosphate to fructose 1,6-bisphosphate by ATP, the first committing step of glycolysis. This Candida albicans (Yeast) protein is ATP-dependent 6-phosphofructokinase subunit alpha (PFK1).